Reading from the N-terminus, the 401-residue chain is Phosphoglycerate kinase, cytosolic (401 aa).

The (2R)-3-phosphoglycerate site is built by Val24, Asp25, Asn27, Arg41, Ser63, His64, Gly66, Arg67, Arg122, His154, and Arg155. ADP is bound at residue Gly200. Residue Gly200 participates in CDP binding. Residues Lys202 and Lys206 each coordinate AMP. Lys206 contacts ATP. An ADP-binding site is contributed by Gly224. Gly224 is a binding site for CDP. AMP is bound by residues Gly225 and Gly297. ATP-binding residues include Gly225 and Gly297. Positions 322 and 327 each coordinate CDP. Phe327 provides a ligand contact to ADP. Glu328 lines the AMP pocket. Residues Glu328, Asp359, and Ser360 each contribute to the ATP site. Asp359 is a binding site for Mg(2+).

It belongs to the phosphoglycerate kinase family. In terms of assembly, monomer. The cofactor is Mg(2+).

Its subcellular location is the cytoplasm. The catalysed reaction is (2R)-3-phosphoglycerate + ATP = (2R)-3-phospho-glyceroyl phosphate + ADP. It functions in the pathway carbohydrate degradation; glycolysis; pyruvate from D-glyceraldehyde 3-phosphate: step 2/5. This is Phosphoglycerate kinase, cytosolic from Nicotiana tabacum (Common tobacco).